The chain runs to 138 residues: MEIPLKEQESSLNSSSGHSSSTSEGVANTQGLDNRGEEILSQLYRPLKACSNTCYCKKCSYHCQLCFLKKGLGICYERSRKRSSKRAKTTTSSAPNESLSARTGDSQPTKKQKKEVETTRATDLGPGRSNTSTSRFAN.

A disordered region spans residues 1–33; it reads MEIPLKEQESSLNSSSGHSSSTSEGVANTQGLD. The segment covering 10–23 has biased composition (low complexity); that stretch reads SSLNSSSGHSSSTS. Positions 50-66 are cysteine-rich; that stretch reads CSNTCYCKKCSYHCQLC. Residues 67–77 form a core region; sequence FLKKGLGICYE. A Nuclear localization signal, and RNA-binding (TAR) motif is present at residues 78-88; sequence RSRKRSSKRAK. Basic residues predominate over residues 79–88; that stretch reads SRKRSSKRAK. A disordered region spans residues 79-138; the sequence is SRKRSSKRAKTTTSSAPNESLSARTGDSQPTKKQKKEVETTRATDLGPGRSNTSTSRFAN. Serine 92 carries the phosphoserine; by host CDK9 modification. 2 stretches are compositionally biased toward polar residues: residues 95 to 109 and 128 to 138; these read PNESLSARTGDSQPT and RSNTSTSRFAN.

The protein belongs to the lentiviruses Tat family. Interacts with host CCNT1. Associates with the P-TEFb complex composed at least of Tat, P-TEFb (CDK9 and CCNT1), TAR RNA, RNA Pol II. Interacts with CCNT2; the resulting complex is unable to bind to TAR RNA. The phosphorylation by CDK9 does not seem to be important for transactivation function.

The protein resides in the host nucleus. The protein localises to the host nucleolus. Transcriptional activator that increases RNA Pol II processivity, thereby increasing the level of full-length viral transcripts. Recognizes a hairpin structure at the 5'-LTR of the nascent viral mRNAs referred to as the transactivation responsive RNA element (TAR) and recruits the cyclin T1-CDK9 complex (P-TEFb complex) that will in turn hyperphosphorylate the RNA polymerase II to allow efficient elongation. The CDK9 component of P-TEFb and other Tat-activated kinases hyperphosphorylate the C-terminus of RNA Pol II that becomes stabilized and much more processive. Its function is as follows. Extracellular circulating Tat can be endocytosed by surrounding uninfected cells via the binding to several surface receptors. Endosomal low pH allows Tat to cross the endosome membrane to enter the cytosol and eventually further translocate into the nucleus, thereby inducing severe cell dysfunctions ranging from cell activation to cell death. Through. In Homo sapiens (Human), this protein is Protein Tat (tat).